A 128-amino-acid polypeptide reads, in one-letter code: MFS18 protein (128 aa).

The first 25 residues, 1-25, serve as a signal peptide directing secretion; that stretch reads MARSSKMMVAARLLALALAVSTAEA. Residues 26–79 form a disordered region; it reads RNIKTTTTEKKDDAVVQPQTFPPFDRLGGGASPAFGGLPGGSIPGSSIPGFSMP. Residues 52-68 are compositionally biased toward gly residues; the sequence is LGGGASPAFGGLPGGSI. Repeat copies occupy residues 64–67, 64–75, 69–72, 69–80, 74–77, 79–82, 81–92, 86–89, 91–94, 104–107, and 113–116. The tract at residues 64 to 92 is 3 X approximate tandem repeats; the sequence is PGGSIPGSSIPGFSMPGSGSSLPGFSLPG. The interval 64-116 is 8 X 4 AA approximate repeats; that stretch reads PGGSIPGSSIPGFSMPGSGSSLPGFSLPGSGTMPLFGGGSPGFSGFGGMPGSP. A compositionally biased stretch (low complexity) spans 69–79; it reads PGSSIPGFSMP. Residues 99-113 are compositionally biased toward gly residues; it reads FGGGSPGFSGFGGMP. Residues 99-128 are disordered; it reads FGGGSPGFSGFGGMPGSPTAGSVPEHANKP.

As to expression, enhanced expression in male flowers. Accumulates in the glumes and in anther walls, paleas and lemmas of mature florets.

The chain is MFS18 protein (MFS18) from Zea mays (Maize).